The chain runs to 314 residues: 4-hydroxy-3-methylbut-2-enyl diphosphate reductase (314 aa).

A [4Fe-4S] cluster-binding site is contributed by C12. Residues H41 and H74 each coordinate (2E)-4-hydroxy-3-methylbut-2-enyl diphosphate. Residues H41 and H74 each contribute to the dimethylallyl diphosphate site. 2 residues coordinate isopentenyl diphosphate: H41 and H74. C96 is a binding site for [4Fe-4S] cluster. A (2E)-4-hydroxy-3-methylbut-2-enyl diphosphate-binding site is contributed by H124. Position 124 (H124) interacts with dimethylallyl diphosphate. H124 is an isopentenyl diphosphate binding site. E126 acts as the Proton donor in catalysis. T167 contacts (2E)-4-hydroxy-3-methylbut-2-enyl diphosphate. C197 contributes to the [4Fe-4S] cluster binding site. 4 residues coordinate (2E)-4-hydroxy-3-methylbut-2-enyl diphosphate: S225, S226, N227, and S269. S225, S226, N227, and S269 together coordinate dimethylallyl diphosphate. Residues S225, S226, N227, and S269 each contribute to the isopentenyl diphosphate site.

This sequence belongs to the IspH family. Requires [4Fe-4S] cluster as cofactor.

The enzyme catalyses isopentenyl diphosphate + 2 oxidized [2Fe-2S]-[ferredoxin] + H2O = (2E)-4-hydroxy-3-methylbut-2-enyl diphosphate + 2 reduced [2Fe-2S]-[ferredoxin] + 2 H(+). It carries out the reaction dimethylallyl diphosphate + 2 oxidized [2Fe-2S]-[ferredoxin] + H2O = (2E)-4-hydroxy-3-methylbut-2-enyl diphosphate + 2 reduced [2Fe-2S]-[ferredoxin] + 2 H(+). It functions in the pathway isoprenoid biosynthesis; dimethylallyl diphosphate biosynthesis; dimethylallyl diphosphate from (2E)-4-hydroxy-3-methylbutenyl diphosphate: step 1/1. The protein operates within isoprenoid biosynthesis; isopentenyl diphosphate biosynthesis via DXP pathway; isopentenyl diphosphate from 1-deoxy-D-xylulose 5-phosphate: step 6/6. Its function is as follows. Catalyzes the conversion of 1-hydroxy-2-methyl-2-(E)-butenyl 4-diphosphate (HMBPP) into a mixture of isopentenyl diphosphate (IPP) and dimethylallyl diphosphate (DMAPP). Acts in the terminal step of the DOXP/MEP pathway for isoprenoid precursor biosynthesis. The protein is 4-hydroxy-3-methylbut-2-enyl diphosphate reductase of Actinobacillus pleuropneumoniae serotype 3 (strain JL03).